The following is a 62-amino-acid chain: Large ribosomal subunit protein bL28 (62 aa).

Residues 1–24 (MARKCVITGRKTKAGNNRSHAMNS) form a disordered region. A compositionally biased stretch (polar residues) spans 14-24 (AGNNRSHAMNS).

This sequence belongs to the bacterial ribosomal protein bL28 family.

In Bacillus pumilus (strain SAFR-032), this protein is Large ribosomal subunit protein bL28.